The chain runs to 285 residues: ATP synthase gamma chain (285 aa).

The protein belongs to the ATPase gamma chain family. As to quaternary structure, F-type ATPases have 2 components, CF(1) - the catalytic core - and CF(0) - the membrane proton channel. CF(1) has five subunits: alpha(3), beta(3), gamma(1), delta(1), epsilon(1). CF(0) has three main subunits: a, b and c.

Its subcellular location is the cell inner membrane. Its function is as follows. Produces ATP from ADP in the presence of a proton gradient across the membrane. The gamma chain is believed to be important in regulating ATPase activity and the flow of protons through the CF(0) complex. The sequence is that of ATP synthase gamma chain from Protochlamydia amoebophila (strain UWE25).